Consider the following 4924-residue polypeptide: Hydroxamate-type ferrichrome siderophore peptide synthetase (4924 aa).

Carrier domains follow at residues Asn715–Lys791, Asp2172–Arg2246, Asn3254–Thr3328, and Ile4402–Lys4478. O-(pantetheine 4'-phosphoryl)serine occurs at positions 752, 2206, 3288, and 4439.

Belongs to the ATP-dependent AMP-binding enzyme family.

It localises to the cytoplasm. Involved in intracellular and extracellular ferrichrome siderophore biosynthesis. This Schizosaccharomyces pombe (strain 972 / ATCC 24843) (Fission yeast) protein is Hydroxamate-type ferrichrome siderophore peptide synthetase (sib1).